A 119-amino-acid chain; its full sequence is Large ribosomal subunit protein bL20 (119 aa).

This sequence belongs to the bacterial ribosomal protein bL20 family.

Binds directly to 23S ribosomal RNA and is necessary for the in vitro assembly process of the 50S ribosomal subunit. It is not involved in the protein synthesizing functions of that subunit. In Azorhizobium caulinodans (strain ATCC 43989 / DSM 5975 / JCM 20966 / LMG 6465 / NBRC 14845 / NCIMB 13405 / ORS 571), this protein is Large ribosomal subunit protein bL20.